We begin with the raw amino-acid sequence, 592 residues long: Cell division protein FtsZ (592 aa).

GTP contacts are provided by residues 24 to 28 (GGGGN), 111 to 113 (GTG), glutamate 142, arginine 146, and aspartate 190. The disordered stretch occupies residues 333-362 (KFQKSVSSVRKNDSGINQTASHPQSSQLRS).

It belongs to the FtsZ family. In terms of assembly, homodimer. Polymerizes to form a dynamic ring structure in a strictly GTP-dependent manner. Interacts directly with several other division proteins.

Its subcellular location is the cytoplasm. In terms of biological role, essential cell division protein that forms a contractile ring structure (Z ring) at the future cell division site. The regulation of the ring assembly controls the timing and the location of cell division. One of the functions of the FtsZ ring is to recruit other cell division proteins to the septum to produce a new cell wall between the dividing cells. Binds GTP and shows GTPase activity. This Bartonella bacilliformis protein is Cell division protein FtsZ.